The following is a 276-amino-acid chain: Large ribosomal subunit protein uL2 (276 aa).

2 disordered regions span residues 38 to 59 and 225 to 276; these read FQKS…GGHK and VMNP…RHKR. The span at 39–49 shows a compositional bias: polar residues; that stretch reads QKSGRNNNGHI. Over residues 50–59 the composition is skewed to basic residues; sequence TTRHKGGGHK.

It belongs to the universal ribosomal protein uL2 family. In terms of assembly, part of the 50S ribosomal subunit. Forms a bridge to the 30S subunit in the 70S ribosome.

Functionally, one of the primary rRNA binding proteins. Required for association of the 30S and 50S subunits to form the 70S ribosome, for tRNA binding and peptide bond formation. It has been suggested to have peptidyltransferase activity; this is somewhat controversial. Makes several contacts with the 16S rRNA in the 70S ribosome. The polypeptide is Large ribosomal subunit protein uL2 (Cupriavidus necator (strain ATCC 17699 / DSM 428 / KCTC 22496 / NCIMB 10442 / H16 / Stanier 337) (Ralstonia eutropha)).